We begin with the raw amino-acid sequence, 298 residues long: 4-hydroxy-tetrahydrodipicolinate synthase (298 aa).

Thr48 serves as a coordination point for pyruvate. Tyr137 functions as the Proton donor/acceptor in the catalytic mechanism. Lys166 serves as the catalytic Schiff-base intermediate with substrate. Ile207 provides a ligand contact to pyruvate.

It belongs to the DapA family. In terms of assembly, homotetramer; dimer of dimers.

Its subcellular location is the cytoplasm. The catalysed reaction is L-aspartate 4-semialdehyde + pyruvate = (2S,4S)-4-hydroxy-2,3,4,5-tetrahydrodipicolinate + H2O + H(+). It functions in the pathway amino-acid biosynthesis; L-lysine biosynthesis via DAP pathway; (S)-tetrahydrodipicolinate from L-aspartate: step 3/4. In terms of biological role, catalyzes the condensation of (S)-aspartate-beta-semialdehyde [(S)-ASA] and pyruvate to 4-hydroxy-tetrahydrodipicolinate (HTPA). This is 4-hydroxy-tetrahydrodipicolinate synthase from Campylobacter lari (strain RM2100 / D67 / ATCC BAA-1060).